A 597-amino-acid chain; its full sequence is Cytosolic Fe-S cluster assembly factor nar1 (597 aa).

Cysteine 20 provides a ligand contact to [4Fe-4S] cluster. The segment at 25–46 is disordered; it reads ESLPQKESQSENPYEVTKEDKV. [4Fe-4S] cluster contacts are provided by cysteine 61, cysteine 64, cysteine 67, cysteine 208, and cysteine 263. A disordered region spans residues 424 to 449; sequence RLPGAKPQAVSSSANRRQPMSRNAAP. Positions 432 to 444 are enriched in polar residues; that stretch reads AVSSSANRRQPMS. Residues cysteine 464 and cysteine 468 each contribute to the [4Fe-4S] cluster site.

The protein belongs to the NARF family.

Its function is as follows. Component of the cytosolic Fe/S protein assembly machinery. Required for maturation of extramitochondrial Fe/S proteins. May play a role in the transfer of pre-assembled Fe/S clusters to target apoproteins. The sequence is that of Cytosolic Fe-S cluster assembly factor nar1 (nar1) from Aspergillus fumigatus (strain ATCC MYA-4609 / CBS 101355 / FGSC A1100 / Af293) (Neosartorya fumigata).